We begin with the raw amino-acid sequence, 131 residues long: uncharacterized protein (131 aa).

The disordered stretch occupies residues 101 to 131; that stretch reads SWWPPSGVVRGGPSSWPPSGVAEPREALGLP.

This is an uncharacterized protein from Homo sapiens (Human).